The chain runs to 503 residues: Potassium voltage-gated channel subfamily V member 1 (503 aa).

Disordered regions lie at residues 1–20 (MDLSPRNRPLLDSSSLDSGS) and 171–192 (KKDTDDQESQHESEQDFSKGPC). Residues 3-213 (LSPRNRPLLD…EKPGSSTAAR (211 aa)) are Cytoplasmic-facing. Positions 10–20 (LLDSSSLDSGS) are enriched in low complexity. A compositionally biased stretch (basic and acidic residues) spans 171 to 187 (KKDTDDQESQHESEQDF). Residues 214–234 (IFGVISIIFVAVSIVNMALMS) traverse the membrane as a helical segment. Residues 235–241 (AELSWLN) lie on the Extracellular side of the membrane. A helical transmembrane segment spans residues 242–262 (LQLLEILEYVCISWFTGEFVL). Residues 263–279 (RFLCVKDRCHFLRKVPN) lie on the Cytoplasmic side of the membrane. A helical membrane pass occupies residues 280–300 (IIDLLAILPFYITLLVESLSG). The Extracellular segment spans residues 301–312 (SHTTQELENVGR). Residues 313 to 334 (LVQVLRLLRALRMLKLGRHSTG) traverse the membrane as a helical; Voltage-sensor segment. Over 335 to 348 (LRSLGMTITQCYEE) the chain is Cytoplasmic. A helical transmembrane segment spans residues 349–369 (VGLLLLFLSVGISIFSTIEYF). Positions 395 to 400 (TVGYGD) match the Selectivity filter motif. The chain crosses the membrane as a helical span at residues 410–430 (IVAFMCILSGILVLALPIAII). Residues 431-503 (NDRFSACYFT…RSSGGDDFWF (73 aa)) are Cytoplasmic-facing.

Belongs to the potassium channel family. V (TC 1.A.1.2) subfamily. Kv8.1/KCNV1 sub-subfamily. Heteromultimer with KCNB1 and KCNB2. Interacts with KCNC4 and KCND1.

The protein localises to the cell membrane. Its function is as follows. Potassium channel subunit that does not form functional channels by itself. Modulates KCNB1 and KCNB2 channel activity by shifting the threshold for inactivation to more negative values and by slowing the rate of inactivation. Can down-regulate the channel activity of KCNB1, KCNB2, KCNC4 and KCND1, possibly by trapping them in intracellular membranes. This is Potassium voltage-gated channel subfamily V member 1 (Kcnv1) from Mus musculus (Mouse).